The following is a 341-amino-acid chain: Spore photoproduct lyase (341 aa).

The Radical SAM core domain maps to S76–R304. [4Fe-4S] cluster is bound by residues C90, C94, and C97. Positions Q217–A234 form a DNA-binding region, H-T-H motif.

This sequence belongs to the radical SAM superfamily. SPL family. As to quaternary structure, monomer or homodimer. Requires [4Fe-4S] cluster as cofactor. S-adenosyl-L-methionine serves as cofactor.

The catalysed reaction is (5R)-5,6-dihydro-5-(thymidin-7-yl)thymidine in DNA = a thymidine dimer in DNA. Its function is as follows. Involved in repair of UV radiation-induced DNA damage during spore germination. Can repair thymine dimer 5-thyminyl-5,6-dihydrothymine (known as spore photoproduct (SP)) by in situ monomerization of SP to two thymines. The protein is Spore photoproduct lyase (splG) of Geobacillus sp. (strain Y412MC61).